Consider the following 778-residue polypeptide: MNKKILETLEFDKVKALFEPHLLTEQGLEQLRQLAPTAKADKIKQAFAEMKEMQALFVEQPHFTILSTKEIAGVCKRLEMGADLNIEEFLLLKRVLLTSRELQSFYANLENVSLEELALWFEKLHDFPQLQGNLQAFNDAGFIENFASEELARIRRKIHDSESQVRDVLQDLLKQKAQMLTEGIVASRNGRQVLPVKNTYRNKIAGVVHDISASGNTVYIEPREVVKLSEEIASLRADERYEMLRILQEISERVRPHAAEIANDAWIIGHLDLIRAKVRFIQERQAVVPQLSENQEIQLLHVCHPLVKNAVANDVYFGQDLTAIVITGPNTGGKTIMLKTLGLTQVMAQSGLPILADKGSRVGIFEEIFADIGDEQSIEQSLSTFSSHMTNIVDILGKVNQHSLLLLDELGAGTDPQEGAALAMAILEDLRLRQIKTMATTHYPELKAYGIETAFVQNASMEFDTATLRPTYRFMQGVPGRSNAFEIAKRLGLSEVIVGDASQQIDQDNDVNRIIEQLEEQTLESRKRLDNIREVEQENLKMNRALKKLYNELNREKETELNKAREQAAEIVDMALSESDQILKNLHSKSQLKPHEIIEAKAKLKKLAPEKVDLSKNKVLQKAKKKRAPKVGDDIVVLSYGQRGTLTSQLKDGRWEAQVGLIKMTLEEKEFDLVQAQQEKPVKKKQVNVVKRTSGRGPQARLDLRGKRYEEAMNELDTFIDQALLNNMAQVDIIHGIGTGVIREGVTKYLQRNKHVKSFGYAPQNAGGSGATIVTFKG.

G328–T335 provides a ligand contact to ATP. Residues L702–K777 enclose the Smr domain.

The protein belongs to the DNA mismatch repair MutS family. MutS2 subfamily. Homodimer. Binds to stalled ribosomes, contacting rRNA.

Endonuclease that is involved in the suppression of homologous recombination and thus may have a key role in the control of bacterial genetic diversity. In terms of biological role, acts as a ribosome collision sensor, splitting the ribosome into its 2 subunits. Detects stalled/collided 70S ribosomes which it binds and splits by an ATP-hydrolysis driven conformational change. Acts upstream of the ribosome quality control system (RQC), a ribosome-associated complex that mediates the extraction of incompletely synthesized nascent chains from stalled ribosomes and their subsequent degradation. Probably generates substrates for RQC. This is Endonuclease MutS2 from Streptococcus pneumoniae (strain CGSP14).